A 422-amino-acid chain; its full sequence is MLSIKFINDNRDYVRKALENRNFDVSVFDTLLSYLDKRGAAMHDAQIKRSELSKLSRQIGSFKDDKAKMNELKLQAANLKKDVVELEKNADEFDQKAYEIIISIPNISLDSVPVGKDENDNQVINTHDNLGRKLVSNVLPHYEIGNKLDIFDFERAVKLSGSRFVVFKGAGAKLARALQNFMLDLHTANGYKEYSVPVLVKPEILFGTGQLPKFKDDLFFMEQTNMYLIPTAEVPLTNLYNNEIIDLSQPVRLTGFTECFRSEAGSGGKDMKGIIRSHQFKKVELVKITSEEDWEFEFKQMLEQAKLVLEELELPYRELQLCTGDLGFSSRTTVDLEVWLPSELKYREISSVSYMGDFQARRAMIRYRDDNNEVKFTHTMNGSGLAIDRLIAAILENYQNSDGTVSIPKKLIPYFGSDKIAY.

Position 231 to 233 (231 to 233 (TAE)) interacts with L-serine. Residue 261–263 (RSE) participates in ATP binding. Glu-284 contacts L-serine. ATP is bound at residue 348–351 (EISS). Ser-383 contributes to the L-serine binding site.

This sequence belongs to the class-II aminoacyl-tRNA synthetase family. Type-1 seryl-tRNA synthetase subfamily. Homodimer. The tRNA molecule binds across the dimer.

It localises to the cytoplasm. It catalyses the reaction tRNA(Ser) + L-serine + ATP = L-seryl-tRNA(Ser) + AMP + diphosphate + H(+). The enzyme catalyses tRNA(Sec) + L-serine + ATP = L-seryl-tRNA(Sec) + AMP + diphosphate + H(+). The protein operates within aminoacyl-tRNA biosynthesis; selenocysteinyl-tRNA(Sec) biosynthesis; L-seryl-tRNA(Sec) from L-serine and tRNA(Sec): step 1/1. Functionally, catalyzes the attachment of serine to tRNA(Ser). Is also able to aminoacylate tRNA(Sec) with serine, to form the misacylated tRNA L-seryl-tRNA(Sec), which will be further converted into selenocysteinyl-tRNA(Sec). This is Serine--tRNA ligase from Mycoplasmopsis agalactiae (strain NCTC 10123 / CIP 59.7 / PG2) (Mycoplasma agalactiae).